A 298-amino-acid polypeptide reads, in one-letter code: Protease HtpX homolog (298 aa).

The next 2 membrane-spanning stretches (helical) occupy residues 14–34 (VVLL…AGYL) and 39–59 (YAMG…SMIF). Zn(2+) is bound at residue histidine 143. Residue glutamate 144 is part of the active site. Residue histidine 147 participates in Zn(2+) binding. A run of 2 helical transmembrane segments spans residues 158–178 (IAVA…RMLW) and 197–217 (IITL…ASLI). Residue glutamate 226 coordinates Zn(2+).

Belongs to the peptidase M48B family. Zn(2+) serves as cofactor.

Its subcellular location is the cell membrane. The sequence is that of Protease HtpX homolog from Streptococcus pyogenes serotype M6 (strain ATCC BAA-946 / MGAS10394).